Reading from the N-terminus, the 162-residue chain is UPF0305 protein MmarC7_1691 (162 aa).

This sequence belongs to the UPF0305 family.

The sequence is that of UPF0305 protein MmarC7_1691 from Methanococcus maripaludis (strain C7 / ATCC BAA-1331).